A 309-amino-acid chain; its full sequence is Ribonuclease Z (309 aa).

Positions 63, 65, 67, 68, 145, 216, and 274 each coordinate Zn(2+). Asp67 (proton acceptor) is an active-site residue.

Belongs to the RNase Z family. As to quaternary structure, homodimer. It depends on Zn(2+) as a cofactor.

The catalysed reaction is Endonucleolytic cleavage of RNA, removing extra 3' nucleotides from tRNA precursor, generating 3' termini of tRNAs. A 3'-hydroxy group is left at the tRNA terminus and a 5'-phosphoryl group is left at the trailer molecule.. Zinc phosphodiesterase, which displays some tRNA 3'-processing endonuclease activity. Probably involved in tRNA maturation, by removing a 3'-trailer from precursor tRNA. This is Ribonuclease Z from Streptococcus pyogenes serotype M1.